We begin with the raw amino-acid sequence, 198 residues long: Recombination protein RecR (198 aa).

The segment at 57 to 72 (CRQCRTLSEEELCPQC) adopts a C4-type zinc-finger fold. A Toprim domain is found at 80-174 (SLLCVVEGPL…TLSRIAHGVP (95 aa)).

This sequence belongs to the RecR family.

May play a role in DNA repair. It seems to be involved in an RecBC-independent recombinational process of DNA repair. It may act with RecF and RecO. The sequence is that of Recombination protein RecR from Pseudomonas aeruginosa (strain LESB58).